We begin with the raw amino-acid sequence, 157 residues long: Class-10 pathogenesis-related protein 1 (157 aa).

This sequence belongs to the BetVI family. High levels in roots and not detectable in hypocotyls, cotyledons, stems, leaves and flower buds of untreated plants. After induction, high levels are present in the vascular bundles of leaves.

The protein resides in the cytoplasm. The polypeptide is Class-10 pathogenesis-related protein 1 (MSPR10-1) (Medicago sativa (Alfalfa)).